A 526-amino-acid polypeptide reads, in one-letter code: Protein translocase subunit SecD (526 aa).

6 helical membrane passes run 8-28, 356-376, 379-399, 405-425, 453-473, and 478-498; these read LIVFIFALLLGVGFSVPSLLE, IIALVGGFILVMGFMALYYSM, VIACMALVVNLFLIVAVMAIF, LPGMAGIVLTVGIAVDANIII, AIFDSNITSLIASVLLYAYGT, and GFALTTGIGILASIITAIIGT.

Belongs to the SecD/SecF family. SecD subfamily. Forms a complex with SecF. Part of the essential Sec protein translocation apparatus which comprises SecA, SecYEG and auxiliary proteins SecDF-YajC and YidC.

The protein resides in the cell inner membrane. Its function is as follows. Part of the Sec protein translocase complex. Interacts with the SecYEG preprotein conducting channel. SecDF uses the proton motive force (PMF) to complete protein translocation after the ATP-dependent function of SecA. The polypeptide is Protein translocase subunit SecD (Helicobacter pylori (strain J99 / ATCC 700824) (Campylobacter pylori J99)).